The sequence spans 213 residues: Orotate phosphoribosyltransferase (213 aa).

Residue K26 coordinates 5-phospho-alpha-D-ribose 1-diphosphate. 34–35 contacts orotate; the sequence is FF. 5-phospho-alpha-D-ribose 1-diphosphate-binding positions include 72 to 73, R99, K100, K103, H105, and 124 to 132; these read YK and DDVITAGTA. Orotate contacts are provided by T128 and R156.

Belongs to the purine/pyrimidine phosphoribosyltransferase family. PyrE subfamily. Homodimer. It depends on Mg(2+) as a cofactor.

It catalyses the reaction orotidine 5'-phosphate + diphosphate = orotate + 5-phospho-alpha-D-ribose 1-diphosphate. The protein operates within pyrimidine metabolism; UMP biosynthesis via de novo pathway; UMP from orotate: step 1/2. Its function is as follows. Catalyzes the transfer of a ribosyl phosphate group from 5-phosphoribose 1-diphosphate to orotate, leading to the formation of orotidine monophosphate (OMP). This chain is Orotate phosphoribosyltransferase, found in Actinobacillus pleuropneumoniae serotype 5b (strain L20).